A 132-amino-acid polypeptide reads, in one-letter code: Aspartate 1-decarboxylase (132 aa).

Catalysis depends on serine 25, which acts as the Schiff-base intermediate with substrate; via pyruvic acid. Pyruvic acid (Ser) is present on serine 25. Threonine 57 provides a ligand contact to substrate. Catalysis depends on tyrosine 58, which acts as the Proton donor. 73–75 (GAA) lines the substrate pocket.

The protein belongs to the PanD family. Heterooctamer of four alpha and four beta subunits. It depends on pyruvate as a cofactor. Is synthesized initially as an inactive proenzyme, which is activated by self-cleavage at a specific serine bond to produce a beta-subunit with a hydroxyl group at its C-terminus and an alpha-subunit with a pyruvoyl group at its N-terminus.

It is found in the cytoplasm. The enzyme catalyses L-aspartate + H(+) = beta-alanine + CO2. It participates in cofactor biosynthesis; (R)-pantothenate biosynthesis; beta-alanine from L-aspartate: step 1/1. Its function is as follows. Catalyzes the pyruvoyl-dependent decarboxylation of aspartate to produce beta-alanine. In Geotalea uraniireducens (strain Rf4) (Geobacter uraniireducens), this protein is Aspartate 1-decarboxylase.